Consider the following 356-residue polypeptide: Icosanoyl-CoA 5-desaturase (356 aa).

The helical transmembrane segment at 5–25 (LYFPISISLSLSLEAMASFIA) threads the bilayer. A disordered region spans residues 38-58 (LDPKIPTKPEPKTETPKPKDD). Basic and acidic residues predominate over residues 42 to 58 (IPTKPEPKTETPKPKDD). 2 helical membrane passes run 88–108 (NAVT…YFSW) and 111–131 (FWIS…TLCF). The Histidine box-1 motif lies at 132 to 137 (HRCLTH). Positions 169–173 (HRYHH) match the Histidine box-2 motif. Residues 236-256 (ALIALLYYVGGFPYIVWGMGF) form a helical membrane-spanning segment. Residues 302–306 (HNNHH) carry the Histidine box-3 motif.

The protein belongs to the fatty acid desaturase type 1 family. Requires Fe(2+) as cofactor.

It localises to the membrane. The catalysed reaction is eicosanoyl-CoA + 2 Fe(II)-[cytochrome b5] + O2 + 2 H(+) = (5Z)-eicosenoyl-CoA + 2 Fe(III)-[cytochrome b5] + 2 H2O. The protein operates within lipid metabolism; monounsaturated fatty acid biosynthesis. Functionally, desaturase involved in the biosynthesis of (5Z)-icos-5-enoate, an unusual monounsaturated fatty acid that makes up to 60% of the total fatty acids in Limnanthes sp. seed oil. Only acts on saturated fatty acids. In Limnanthes douglasii (Douglas' meadowfoam), this protein is Icosanoyl-CoA 5-desaturase.